The primary structure comprises 342 residues: P2Y purinoceptor 12 (342 aa).

The Extracellular segment spans residues 1 to 27; it reads MQAIDNLTSAPGNTSLCTRDYKITQVL. 2 N-linked (GlcNAc...) asparagine glycosylation sites follow: asparagine 6 and asparagine 13. Cystine bridges form between cysteine 17-cysteine 270 and cysteine 97-cysteine 175. The helical transmembrane segment at 28–50 threads the bilayer; sequence FPLLYTVLFFVGLITNSLAMRIF. The Cytoplasmic segment spans residues 51 to 61; that stretch reads FQIRSKSNFII. Phosphoserine occurs at positions 55 and 57. A helical transmembrane segment spans residues 62-82; that stretch reads FLKNTVISDLLMILTFPFKIL. Topologically, residues 83–97 are extracellular; it reads SDAKLGAGPLRTFVC. The ADP site is built by arginine 93, cysteine 97, and tyrosine 105. A helical membrane pass occupies residues 98 to 118; sequence QVTSVIFYFTMYISISFLGLI. The Cytoplasmic portion of the chain corresponds to 119–142; that stretch reads TIDRYQKTTRPFKTSNPKNLLGAK. A helical membrane pass occupies residues 143–162; it reads ILSVLIWAFMFLLSLPNMIL. Residues 156-159, 175-179, histidine 187, and asparagine 191 each bind ADP; these read SLPN and CSFLK. Residues 163–185 lie on the Extracellular side of the membrane; that stretch reads TNRRPRDKNVKKCSFLKSEFGLV. The helical transmembrane segment at 186–207 threads the bilayer; the sequence is WHEIVNYICQVIFWINFLIVIV. Topologically, residues 208–233 are cytoplasmic; the sequence is CYTLITKELYRSYVRTRGVGKVPRKK. The chain crosses the membrane as a helical span at residues 234–259; sequence VNVKVFIIIAVFFICFVPFHFARIPY. ADP is bound by residues 256–259, glutamine 263, and lysine 280; that span reads RIPY. At 260-278 the chain is on the extracellular side; sequence TLSQTRDVFDCAAENTLFY. The chain crosses the membrane as a helical span at residues 279-298; it reads VKESTLWLTSLNACLDPFIY. At 299–342 the chain is on the cytoplasmic side; sequence FFLCKSFRNSLISMLKCPNSATSQSQDNRKKEQDGGDPNEETPM. The segment at 317–342 is disordered; that stretch reads NSATSQSQDNRKKEQDGGDPNEETPM. The segment covering 333–342 has biased composition (acidic residues); that stretch reads GGDPNEETPM.

Belongs to the G-protein coupled receptor 1 family.

Its subcellular location is the cell membrane. Its function is as follows. Receptor for ADP and ATP coupled to G-proteins that inhibit the adenylyl cyclase second messenger system. Required for normal platelet aggregation and blood coagulation. The polypeptide is P2Y purinoceptor 12 (P2RY12) (Macaca fascicularis (Crab-eating macaque)).